Consider the following 616-residue polypeptide: Dihydroxy-acid dehydratase (616 aa).

Aspartate 81 is a Mg(2+) binding site. Position 122 (cysteine 122) interacts with [2Fe-2S] cluster. Aspartate 123 and lysine 124 together coordinate Mg(2+). Lysine 124 is modified (N6-carboxylysine). Position 195 (cysteine 195) interacts with [2Fe-2S] cluster. Glutamate 491 is a binding site for Mg(2+). The active-site Proton acceptor is the serine 517.

Belongs to the IlvD/Edd family. Homodimer. [2Fe-2S] cluster serves as cofactor. The cofactor is Mg(2+).

It catalyses the reaction (2R)-2,3-dihydroxy-3-methylbutanoate = 3-methyl-2-oxobutanoate + H2O. The enzyme catalyses (2R,3R)-2,3-dihydroxy-3-methylpentanoate = (S)-3-methyl-2-oxopentanoate + H2O. The protein operates within amino-acid biosynthesis; L-isoleucine biosynthesis; L-isoleucine from 2-oxobutanoate: step 3/4. It participates in amino-acid biosynthesis; L-valine biosynthesis; L-valine from pyruvate: step 3/4. Its function is as follows. Functions in the biosynthesis of branched-chain amino acids. Catalyzes the dehydration of (2R,3R)-2,3-dihydroxy-3-methylpentanoate (2,3-dihydroxy-3-methylvalerate) into 2-oxo-3-methylpentanoate (2-oxo-3-methylvalerate) and of (2R)-2,3-dihydroxy-3-methylbutanoate (2,3-dihydroxyisovalerate) into 2-oxo-3-methylbutanoate (2-oxoisovalerate), the penultimate precursor to L-isoleucine and L-valine, respectively. The polypeptide is Dihydroxy-acid dehydratase (Photorhabdus laumondii subsp. laumondii (strain DSM 15139 / CIP 105565 / TT01) (Photorhabdus luminescens subsp. laumondii)).